The following is a 351-amino-acid chain: UDP-3-O-acylglucosamine N-acyltransferase (351 aa).

His257 serves as the catalytic Proton acceptor.

It belongs to the transferase hexapeptide repeat family. LpxD subfamily. As to quaternary structure, homotrimer.

It carries out the reaction a UDP-3-O-[(3R)-3-hydroxyacyl]-alpha-D-glucosamine + a (3R)-hydroxyacyl-[ACP] = a UDP-2-N,3-O-bis[(3R)-3-hydroxyacyl]-alpha-D-glucosamine + holo-[ACP] + H(+). It participates in bacterial outer membrane biogenesis; LPS lipid A biosynthesis. Catalyzes the N-acylation of UDP-3-O-acylglucosamine using 3-hydroxyacyl-ACP as the acyl donor. Is involved in the biosynthesis of lipid A, a phosphorylated glycolipid that anchors the lipopolysaccharide to the outer membrane of the cell. The polypeptide is UDP-3-O-acylglucosamine N-acyltransferase (Brucella abortus (strain S19)).